The primary structure comprises 149 residues: Transcriptional repressor NrdR (149 aa).

A zinc finger lies at 3 to 34; the sequence is CPFCSHPETQVVETRVAEDGDFVRRRRQCGAC. Residues 49–139 enclose the ATP-cone domain; sequence PNVVKKDGRR…VYRNFEDIDE (91 aa).

Belongs to the NrdR family. The cofactor is Zn(2+).

In terms of biological role, negatively regulates transcription of bacterial ribonucleotide reductase nrd genes and operons by binding to NrdR-boxes. In Paracidovorax citrulli (strain AAC00-1) (Acidovorax citrulli), this protein is Transcriptional repressor NrdR.